The sequence spans 494 residues: Zinc finger and SCAN domain-containing protein 30 (494 aa).

In terms of domain architecture, SCAN box spans 48-130 (RQKFRQFSYS…TMLEELEKEL (83 aa)). Residue Lys-197 forms a Glycyl lysine isopeptide (Lys-Gly) (interchain with G-Cter in SUMO2) linkage. C2H2-type zinc fingers lie at residues 301-323 (YECFDCGKAFCQSSKLIRHQRIH), 329-351 (YACKECGKAFSLSSDLVRHQRIH), 357-379 (YECCECGKAFRGSSELIRHRRIH), 385-407 (YECGECGKAFSRSSALIQHKKIH), 413-435 (YECIACGKAFGRSSILIEHQRIH), 441-463 (YECNECGKSFNQSSALTQHQRIH), and 469-491 (YECSECRKTFRHRSGLMQHQRTH).

This sequence belongs to the krueppel C2H2-type zinc-finger protein family.

It localises to the nucleus. May be involved in transcriptional regulation. The chain is Zinc finger and SCAN domain-containing protein 30 (ZSCAN30) from Homo sapiens (Human).